Consider the following 395-residue polypeptide: Multidrug resistance protein MdtL (395 aa).

The next 12 helical transmembrane spans lie at 4–24 (FLLCSFALVLLYPAGIDMYLV), 42–62 (IAFSVYLAGMATAMLFAGKIA), 69–89 (PVAIVGAIVFMMASLLCSRAS), 93–113 (LFLSGRFLQGIGAGGCYVVAF), 131–151 (LLNGITCIVPVLAPVVGHLIM), 158–178 (SLFYTMSAMGIIVGLLSLFIL), 217–237 (VSVILTFVNASPVLLMEVMGF), 247–267 (ALTAGVSMVVSFSTPFALGLF), 271–291 (TLMLVSQGLFLTAGVTLSLAH), 295–315 (VTLFGLTLICAGFSVGFGVAM), 328–350 (VASSTLGIAQVCGSSLWIWLAAI), and 355–377 (AMNMLIGILIGCSIVSILLIFSV).

The protein belongs to the major facilitator superfamily. DHA1 family. MdtL (TC 2.A.1.2.22) subfamily.

The protein resides in the cell inner membrane. The polypeptide is Multidrug resistance protein MdtL (Salmonella dublin (strain CT_02021853)).